A 464-amino-acid polypeptide reads, in one-letter code: Fumarate hydratase class II (464 aa).

Residues S100–T102, H131–D134, S141–N143, and T189 each bind substrate. Residue H190 is the Proton donor/acceptor of the active site. S320 is a catalytic residue. Substrate is bound by residues S321 and K326 to N328.

This sequence belongs to the class-II fumarase/aspartase family. Fumarase subfamily. Homotetramer.

Its subcellular location is the cytoplasm. The catalysed reaction is (S)-malate = fumarate + H2O. Its pathway is carbohydrate metabolism; tricarboxylic acid cycle; (S)-malate from fumarate: step 1/1. Functionally, involved in the TCA cycle. Catalyzes the stereospecific interconversion of fumarate to L-malate. This is Fumarate hydratase class II from Deinococcus radiodurans (strain ATCC 13939 / DSM 20539 / JCM 16871 / CCUG 27074 / LMG 4051 / NBRC 15346 / NCIMB 9279 / VKM B-1422 / R1).